We begin with the raw amino-acid sequence, 101 residues long: UPF0473 protein STER_1939 (101 aa).

It belongs to the UPF0473 family.

This is UPF0473 protein STER_1939 from Streptococcus thermophilus (strain ATCC BAA-491 / LMD-9).